Reading from the N-terminus, the 874-residue chain is Breast cancer anti-estrogen resistance protein 1 (874 aa).

Met-1 carries the post-translational modification N-acetylmethionine. The SH3 domain occupies 3-65; the sequence is VPNVLAKALY…PGNRLKILVG (63 aa). Residues 71–177 form a disordered region; the sequence is PVGPGPGPPA…LYQVPPGPGS (107 aa). The span at 73–88 shows a compositional bias: pro residues; the sequence is GPGPGPPATPPQPQPS. Residues 119–420 form a substrate for kinases region; that stretch reads YLVPTPSKTQ…DGVYAVPPPA (302 aa). Tyr-132 is subject to Phosphotyrosine. Residues 139-155 show a composition bias toward polar residues; the sequence is PQFQSPPAKQTSTFSKQ. Ser-143 carries the phosphoserine modification. Tyr-238 and Tyr-253 each carry phosphotyrosine. A Phosphothreonine modification is found at Thr-273. Ser-296 carries the post-translational modification Phosphoserine. Tyr-366, Tyr-376, and Tyr-414 each carry phosphotyrosine. Positions 374–388 are enriched in low complexity; that stretch reads DLYDVPPGLRRPGPG. 3 disordered regions span residues 374 to 394, 409 to 450, and 610 to 662; these read DLYD…YDVP, VDDG…SLEV, and RRTK…NSEG. Over residues 420-430 the composition is skewed to basic and acidic residues; it reads AEREAPTDGKR. The segment covering 431-448 has biased composition (low complexity); that stretch reads LSASSTGSTRSSQSASSL. Residues Ser-432, Ser-441, and Ser-643 each carry the phosphoserine modification. A compositionally biased stretch (polar residues) spans 621-659; the sequence is GSSSLHPNPTDKASSIQSRPLPSPPKFTSQDSPDGQYEN. The SH3-binding signature appears at 639–647; that stretch reads RPLPSPPKF. The tract at residues 750–800 is divergent helix-loop-helix motif; the sequence is FYLEQCEANLTTLTDAVDAFFTAVATNQPPKIFVAHSKFVILSAHKLVFIG.

The protein belongs to the CAS family. In terms of assembly, forms complexes in vivo with PTK2/FAK1, adapter protein CRKL and LYN kinase. Can heterodimerize with NEDD9. Component of a complex comprised of SH2D3C, BCAR1/CAS, and CRK. Within the complex, interacts with SH2D3C (via C-terminus), and CRK. Part of a complex comprised of PTPRA, BCAR1, BCAR3 (via SH2 domain) and SRC; the formation of the complex is dependent on integrin mediated-tyrosine phosphorylation of PTPRA. Interacts with BCAR3 (via Ras-GEF domain); the interaction regulates adhesion-dependent serine phosphorylation. Interacts with SMAD2 and SMAD3. Interacts with NPHP1. Interacts with PTK2B/PYK2. Interacts (via C-terminus) with SH2D3C/CHAT isoform 2 (via C-terminus). Interacts with activated CSPG4. Interacts with BMX, INPPL1/SHIP2 and PEAK1. Part of a collagen stimulated complex involved in cell migration composed of CDC42, CRK, TNK2 and BCAR1/p130cas. Interacts with TNK2 via SH3 domains. Interacts (when tyrosine-phosphorylated) with tensin TNS1; the interaction is increased by phosphorylation of TNS1. PTK2/FAK1 activation mediates phosphorylation at the YDYVHL motif; phosphorylation is most likely catalyzed by SRC family members. SRC-family kinases are recruited to the phosphorylated sites and can phosphorylate other tyrosine residues. Tyrosine phosphorylation is triggered by integrin mediated adhesion of cells to the extracellular matrix. Post-translationally, dephosphorylated by PTPN14 at Tyr-132. In terms of processing, phosphorylated by SRC kinase in a EDN1- and PTK2B-mediated manner; phosphorylation strengthens its interaction with BCAR3 as part of the PTK2B/BCAR1/BCAR3/RAP1 signaling pathway. Expressed in olfactory sensory neurons (at protein level). Expressed abundantly in the liver, lung, brain, and at lower levels in the heart (at protein level).

It localises to the cell junction. The protein resides in the focal adhesion. The protein localises to the cytoplasm. Its subcellular location is the cell projection. It is found in the axon. Its function is as follows. Docking protein which plays a central coordinating role for tyrosine kinase-based signaling related to cell adhesion. Implicated in induction of cell migration and cell branching. Involved in the BCAR3-mediated inhibition of TGFB signaling. In Mus musculus (Mouse), this protein is Breast cancer anti-estrogen resistance protein 1 (Bcar1).